The primary structure comprises 165 residues: Immunity protein YokJ (165 aa).

In terms of assembly, probably interacts with cognate toxin YokI but not with other non-cognate toxins. The interaction inhibits the toxic activity of YokI.

It localises to the cytoplasm. Its function is as follows. Immunity component of one of 6 LXG toxin-immunity modules in this strain. They promote kin selection, mediate competition in biofilms, and drive spatial segregation of different strains, indicating that LXG toxins may help avoid warfare between strains in biofilms. Mediates intercellular competition during biofilm formation; disruption of the operon disadvantages the bacteria, but overexpression of the cognate immunity protein restores growth in competition with wild-type. In situ neutralizes the toxic effect of cognate toxin YokI. Neutralizes the ability to inhibit growth of cognate toxin YokI upon expression in E.coli. Does not have immunity protein activity on other LXG toxins. The protein is Immunity protein YokJ (yokJ) of Bacillus subtilis (strain 168).